Consider the following 433-residue polypeptide: Oxysterol-binding protein-like protein OBPa (433 aa).

It belongs to the OSBP family.

This is Oxysterol-binding protein-like protein OBPa (OBPA) from Candida albicans (strain SC5314 / ATCC MYA-2876) (Yeast).